The primary structure comprises 87 residues: ParB-like nuclease domain-containing protein YnaK (87 aa).

In Escherichia coli (strain K12), this protein is ParB-like nuclease domain-containing protein YnaK (ynaK).